A 212-amino-acid polypeptide reads, in one-letter code: Ribonuclease HII (212 aa).

In terms of domain architecture, RNase H type-2 spans 17–206 (RVIAGVDEAG…KSTKPQSLQT (190 aa)). A divalent metal cation is bound by residues aspartate 23, glutamate 24, and aspartate 115.

Belongs to the RNase HII family. The cofactor is Mn(2+). Mg(2+) is required as a cofactor.

It is found in the cytoplasm. The enzyme catalyses Endonucleolytic cleavage to 5'-phosphomonoester.. In terms of biological role, endonuclease that specifically degrades the RNA of RNA-DNA hybrids. In Syntrophus aciditrophicus (strain SB), this protein is Ribonuclease HII.